We begin with the raw amino-acid sequence, 639 residues long: Threonine--tRNA ligase (639 aa).

One can recognise a TGS domain in the interval 1 to 61; it reads MIRITLPDNS…DHDARLQIIT (61 aa). Residues 242-533 form a catalytic region; that stretch reads DHRRLGRELD…LIEQHAGALP (292 aa). Residues cysteine 333, histidine 384, and histidine 510 each coordinate Zn(2+).

It belongs to the class-II aminoacyl-tRNA synthetase family. In terms of assembly, homodimer. Zn(2+) is required as a cofactor.

It localises to the cytoplasm. The catalysed reaction is tRNA(Thr) + L-threonine + ATP = L-threonyl-tRNA(Thr) + AMP + diphosphate + H(+). Its function is as follows. Catalyzes the attachment of threonine to tRNA(Thr) in a two-step reaction: L-threonine is first activated by ATP to form Thr-AMP and then transferred to the acceptor end of tRNA(Thr). Also edits incorrectly charged L-seryl-tRNA(Thr). The chain is Threonine--tRNA ligase from Paracidovorax citrulli (strain AAC00-1) (Acidovorax citrulli).